The chain runs to 379 residues: Synaptic vesicle membrane protein VAT-1 (379 aa).

Position 273 is a phosphoserine (Ser-273).

The protein belongs to the zinc-containing alcohol dehydrogenase family. Quinone oxidoreductase subfamily. Cholinergic synaptic vesicles.

It is found in the cytoplasmic vesicle. The protein resides in the secretory vesicle. Its subcellular location is the synaptic vesicle membrane. Functionally, may play a central role in the functions mediated by specific classes of synaptic vesicles. This chain is Synaptic vesicle membrane protein VAT-1, found in Tetronarce californica (Pacific electric ray).